A 308-amino-acid chain; its full sequence is uncharacterized protein (308 aa).

NADP(+)-binding residues include leucine 50, aspartate 90, asparagine 117, tyrosine 182, lysine 186, isoleucine 222, and threonine 224. The active-site Proton acceptor is tyrosine 182. Catalysis depends on lysine 186, which acts as the Lowers pKa of active site Tyr.

This sequence belongs to the short-chain dehydrogenases/reductases (SDR) family.

This is an uncharacterized protein from Saccharomyces cerevisiae (strain ATCC 204508 / S288c) (Baker's yeast).